The following is a 205-amino-acid chain: Holliday junction branch migration complex subunit RuvA (205 aa).

Residues 1 to 64 (MIGHIQGVLT…EDAQLLYGFI (64 aa)) are domain I. The domain II stretch occupies residues 65–143 (SASERSLFRL…DWQPSTPFTD (79 aa)). Residues 136-157 (QPSTPFTDRAPLDSQGMDAREH) form a disordered region. A flexible linker region spans residues 144–156 (RAPLDSQGMDARE). The domain III stretch occupies residues 157–205 (HPADARTDAISALQSLGYKENQAEKALQKVYSAEHNSETLIRLALKQLS).

The protein belongs to the RuvA family. As to quaternary structure, homotetramer. Forms an RuvA(8)-RuvB(12)-Holliday junction (HJ) complex. HJ DNA is sandwiched between 2 RuvA tetramers; dsDNA enters through RuvA and exits via RuvB. An RuvB hexamer assembles on each DNA strand where it exits the tetramer. Each RuvB hexamer is contacted by two RuvA subunits (via domain III) on 2 adjacent RuvB subunits; this complex drives branch migration. In the full resolvosome a probable DNA-RuvA(4)-RuvB(12)-RuvC(2) complex forms which resolves the HJ.

The protein resides in the cytoplasm. Functionally, the RuvA-RuvB-RuvC complex processes Holliday junction (HJ) DNA during genetic recombination and DNA repair, while the RuvA-RuvB complex plays an important role in the rescue of blocked DNA replication forks via replication fork reversal (RFR). RuvA specifically binds to HJ cruciform DNA, conferring on it an open structure. The RuvB hexamer acts as an ATP-dependent pump, pulling dsDNA into and through the RuvAB complex. HJ branch migration allows RuvC to scan DNA until it finds its consensus sequence, where it cleaves and resolves the cruciform DNA. The polypeptide is Holliday junction branch migration complex subunit RuvA (Idiomarina loihiensis (strain ATCC BAA-735 / DSM 15497 / L2-TR)).